The following is a 90-amino-acid chain: Small ribosomal subunit protein uS15 (90 aa).

It belongs to the universal ribosomal protein uS15 family. As to quaternary structure, part of the 30S ribosomal subunit. Forms a bridge to the 50S subunit in the 70S ribosome, contacting the 23S rRNA.

One of the primary rRNA binding proteins, it binds directly to 16S rRNA where it helps nucleate assembly of the platform of the 30S subunit by binding and bridging several RNA helices of the 16S rRNA. Its function is as follows. Forms an intersubunit bridge (bridge B4) with the 23S rRNA of the 50S subunit in the ribosome. This Aliarcobacter butzleri (strain RM4018) (Arcobacter butzleri) protein is Small ribosomal subunit protein uS15.